The sequence spans 314 residues: UPF0761 membrane protein VP0125 (314 aa).

6 consecutive transmembrane segments (helical) span residues 41-61, 104-124, 139-159, 185-205, 217-237, and 249-269; these read YLAYITLLSIVPMLTVLLSIL, MSAVGGGFLFIAALMLISNID, LVFSFSMYWMVLTLGPILVGA, FLRWLPLLLSFFAFLGLYILV, VGAAVAAILFELSKKGFALYI, and ALAAIPILFVWVYLCWMIVLL. Positions 295-314 are disordered; that stretch reads ESQLANEGSESSDSANSTSQ.

The protein belongs to the UPF0761 family.

The protein resides in the cell inner membrane. This chain is UPF0761 membrane protein VP0125, found in Vibrio parahaemolyticus serotype O3:K6 (strain RIMD 2210633).